Consider the following 639-residue polypeptide: Mediator of RNA polymerase II transcription subunit 17 (639 aa).

A compositionally biased stretch (polar residues) spans 32–43 (ASATVTTNGTTA). 2 disordered regions span residues 32–68 (ASAT…EEHS) and 130–159 (MGDA…NNDS). Over residues 48–57 (DSGSQQSVSS) the composition is skewed to low complexity. Positions 58 to 68 (APIQQNSEEHS) are enriched in polar residues. Residues 245–271 (WKLRSLEDSKALLKENYAKLQKSLEVE) are a coiled coil.

Belongs to the Mediator complex subunit 17 family. Component of the Mediator complex.

The protein localises to the nucleus. In terms of biological role, component of the Mediator complex, a coactivator involved in the regulated transcription of nearly all RNA polymerase II-dependent genes. Mediator functions as a bridge to convey information from gene-specific regulatory proteins to the basal RNA polymerase II transcription machinery. Mediator is recruited to promoters by direct interactions with regulatory proteins and serves as a scaffold for the assembly of a functional preinitiation complex with RNA polymerase II and the general transcription factors. In Eremothecium gossypii (strain ATCC 10895 / CBS 109.51 / FGSC 9923 / NRRL Y-1056) (Yeast), this protein is Mediator of RNA polymerase II transcription subunit 17 (SRB4).